Reading from the N-terminus, the 570-residue chain is Proline--tRNA ligase (570 aa).

The protein belongs to the class-II aminoacyl-tRNA synthetase family. ProS type 1 subfamily. As to quaternary structure, homodimer.

It localises to the cytoplasm. It carries out the reaction tRNA(Pro) + L-proline + ATP = L-prolyl-tRNA(Pro) + AMP + diphosphate. Functionally, catalyzes the attachment of proline to tRNA(Pro) in a two-step reaction: proline is first activated by ATP to form Pro-AMP and then transferred to the acceptor end of tRNA(Pro). As ProRS can inadvertently accommodate and process non-cognate amino acids such as alanine and cysteine, to avoid such errors it has two additional distinct editing activities against alanine. One activity is designated as 'pretransfer' editing and involves the tRNA(Pro)-independent hydrolysis of activated Ala-AMP. The other activity is designated 'posttransfer' editing and involves deacylation of mischarged Ala-tRNA(Pro). The misacylated Cys-tRNA(Pro) is not edited by ProRS. This Neisseria meningitidis serogroup B (strain ATCC BAA-335 / MC58) protein is Proline--tRNA ligase.